The primary structure comprises 144 residues: Transcriptional regulator MraZ (144 aa).

SpoVT-AbrB domains follow at residues 5-47 (TYTP…PRAE) and 77-120 (TDEQ…DAQA).

It belongs to the MraZ family. Forms oligomers.

The protein resides in the cytoplasm. It is found in the nucleoid. In Mycolicibacterium gilvum (strain PYR-GCK) (Mycobacterium gilvum (strain PYR-GCK)), this protein is Transcriptional regulator MraZ.